The sequence spans 205 residues: Large ribosomal subunit protein bL25 (205 aa).

Positions 180–205 (HEEVAEEAEETEGEDAEEAPAAEGEE) are disordered. The span at 183–205 (VAEEAEETEGEDAEEAPAAEGEE) shows a compositional bias: acidic residues.

Belongs to the bacterial ribosomal protein bL25 family. CTC subfamily. Part of the 50S ribosomal subunit; part of the 5S rRNA/L5/L18/L25 subcomplex. Contacts the 5S rRNA. Binds to the 5S rRNA independently of L5 and L18.

This is one of the proteins that binds to the 5S RNA in the ribosome where it forms part of the central protuberance. This is Large ribosomal subunit protein bL25 from Corynebacterium diphtheriae (strain ATCC 700971 / NCTC 13129 / Biotype gravis).